The following is an 88-amino-acid chain: Carboxysome shell vertex protein CsoS4A (88 aa).

Residues 1–76 (MLICKVLKPL…SDLTIVGIID (76 aa)) form the BMV domain.

It belongs to the CcmL/EutN family. CsoS4 subfamily. Homopentamer.

The protein localises to the carboxysome. Functionally, probably forms vertices in the carboxysome, a polyhedral inclusion where RuBisCO (ribulose bisphosphate carboxylase, cbbL-cbbS) is sequestered. Has been modeled to induce curvature upon insertion into an otherwise flat hexagonal layer of major carboxysome subunits. Has not been identified in purified carboxysomes; it is expected to be present in very low amounts. This chain is Carboxysome shell vertex protein CsoS4A, found in Prochlorococcus marinus subsp. pastoris (strain CCMP1986 / NIES-2087 / MED4).